The following is a 511-amino-acid chain: Bifunctional purine biosynthesis protein PurH (511 aa).

Residues 1 to 145 enclose the MGS-like domain; the sequence is MKKRALVSVS…KNHKFVSVIV (145 aa).

Belongs to the PurH family.

The enzyme catalyses (6R)-10-formyltetrahydrofolate + 5-amino-1-(5-phospho-beta-D-ribosyl)imidazole-4-carboxamide = 5-formamido-1-(5-phospho-D-ribosyl)imidazole-4-carboxamide + (6S)-5,6,7,8-tetrahydrofolate. The catalysed reaction is IMP + H2O = 5-formamido-1-(5-phospho-D-ribosyl)imidazole-4-carboxamide. The protein operates within purine metabolism; IMP biosynthesis via de novo pathway; 5-formamido-1-(5-phospho-D-ribosyl)imidazole-4-carboxamide from 5-amino-1-(5-phospho-D-ribosyl)imidazole-4-carboxamide (10-formyl THF route): step 1/1. It participates in purine metabolism; IMP biosynthesis via de novo pathway; IMP from 5-formamido-1-(5-phospho-D-ribosyl)imidazole-4-carboxamide: step 1/1. The protein is Bifunctional purine biosynthesis protein PurH of Bacillus anthracis (strain A0248).